Here is a 117-residue protein sequence, read N- to C-terminus: Large ribosomal subunit protein uL18 (117 aa).

Belongs to the universal ribosomal protein uL18 family. In terms of assembly, part of the 50S ribosomal subunit; part of the 5S rRNA/L5/L18/L25 subcomplex. Contacts the 5S and 23S rRNAs.

Its function is as follows. This is one of the proteins that bind and probably mediate the attachment of the 5S RNA into the large ribosomal subunit, where it forms part of the central protuberance. The sequence is that of Large ribosomal subunit protein uL18 from Sphingopyxis alaskensis (strain DSM 13593 / LMG 18877 / RB2256) (Sphingomonas alaskensis).